Consider the following 265-residue polypeptide: tRNA pseudouridine synthase A (265 aa).

Asp-52 (nucleophile) is an active-site residue. Residue Tyr-110 coordinates substrate. The segment at 244–265 (FYRDGPPARTPGGTTDAEEDEG) is disordered.

Belongs to the tRNA pseudouridine synthase TruA family. Homodimer.

The enzyme catalyses uridine(38/39/40) in tRNA = pseudouridine(38/39/40) in tRNA. Its function is as follows. Formation of pseudouridine at positions 38, 39 and 40 in the anticodon stem and loop of transfer RNAs. This chain is tRNA pseudouridine synthase A, found in Myxococcus xanthus.